Reading from the N-terminus, the 481-residue chain is uncharacterized protein (481 aa).

Residues Phe-18–Phe-38 traverse the membrane as a helical segment.

It is found in the cell inner membrane. Its function is as follows. Involved in DNA conjugation in the recipient strain. This is an uncharacterized protein from Mycolicibacterium smegmatis (strain MKD8) (Mycobacterium smegmatis).